Here is a 71-residue protein sequence, read N- to C-terminus: Small ribosomal subunit protein bS21 (71 aa).

This sequence belongs to the bacterial ribosomal protein bS21 family.

This is Small ribosomal subunit protein bS21 from Shewanella amazonensis (strain ATCC BAA-1098 / SB2B).